Reading from the N-terminus, the 1187-residue chain is BAI1-associated protein 3 (1187 aa).

The disordered stretch occupies residues 55 to 81 (SFRRRTEQDPGSASADPQEPATGAWKP). The C2 1 domain maps to 176–335 (SLEEHTEAIE…VKSARANGTA (160 aa)). Ca(2+) is bound by residues D211, D217, D295, and D297. The 122-residue stretch at 663–784 (FELYLTLADL…EATLFYTELL (122 aa)) folds into the MHD1 domain. In terms of domain architecture, MHD2 spans 888–996 (DEAVAPLMKY…CSTRECIEQF (109 aa)). The C2 2 domain occupies 1010-1136 (RFGRLSVRCH…GVARPQVGGG (127 aa)). Ca(2+) is bound by residues L1040, D1041, D1047, D1105, D1107, S1110, and D1113.

The protein belongs to the unc-13 family. In terms of assembly, interacts with ADGRB1; this interaction is direct. Interacts with endosomal SNARE proteins VAMP3, VAMP4, STX6 and STX16; this interaction is increased in the presence of calcium. Requires Ca(2+) as cofactor. As to expression, predominantly expressed in brain. Also expressed in nonneural tissues such as breast and testes epithelium.

It localises to the cytoplasm. The protein localises to the cytosol. Its subcellular location is the recycling endosome membrane. The protein resides in the late endosome membrane. It is found in the golgi apparatus. It localises to the trans-Golgi network membrane. The protein localises to the cell membrane. In terms of biological role, functions in endosome to Golgi retrograde transport. In response to calcium influx, may interact with SNARE fusion receptors and membrane phospholipids to mediate endosome fusion with the trans-Golgi network. By promoting the recycling of secretory vesicle transmembrane proteins, it indirectly controls dense-core secretory vesicle biogenesis, maturation and their ability to mediate the constitutive and regulated secretion of neurotransmitters and hormones. May regulate behavior and food intake by controlling calcium-stimulated exocytosis of neurotransmitters including NPY and serotonin and hormones like insulin. Proposed to play a role in hypothalamic neuronal firing by modulating gamma-aminobutyric acid (GABA)ergic inhibitory neurotransmission. This chain is BAI1-associated protein 3, found in Homo sapiens (Human).